The chain runs to 109 residues: U26-theraphotoxin-Cg1b (109 aa).

The first 18 residues, 1 to 18, serve as a signal peptide directing secretion; it reads MNTIIPLLLLSLLITVYA. Positions 19–67 are excised as a propeptide; the sequence is YALEDGNKEEMQDIAESEFEASNEMLQLAHLLEADRAETEEDRNSRQKR. 3 disulfides stabilise this stretch: C68-C83, C75-C88, and C82-C103.

This sequence belongs to the neurotoxin 14 (magi-1) family. 07 (Jztx-56) subfamily. Expressed by the venom gland.

The protein resides in the secreted. Its function is as follows. Probable ion channel inhibitor. The polypeptide is U26-theraphotoxin-Cg1b (Chilobrachys guangxiensis (Chinese earth tiger tarantula)).